The chain runs to 481 residues: uncharacterized protein (481 aa).

A compositionally biased stretch (basic residues) spans 1–18; that stretch reads MSRLPSKTKYHSSHRSLN. The disordered stretch occupies residues 1 to 37; the sequence is MSRLPSKTKYHSSHRSLNRKTPLLQRSSETNSLRESG. Over residues 24-34 the composition is skewed to polar residues; it reads LQRSSETNSLR. 2 consecutive transmembrane segments (helical) span residues 172-191 and 195-214; these read SIST…AGAI and AAAG…YLCW.

It localises to the membrane. This is an uncharacterized protein from Coxiella burnetii (strain RSA 493 / Nine Mile phase I).